The chain runs to 334 residues: Holliday junction branch migration complex subunit RuvB (334 aa).

The large ATPase domain (RuvB-L) stretch occupies residues 4–184; it reads ADRLIAADAQ…FGIVQRLEFY (181 aa). ATP is bound by residues Ile23, Arg24, Gly65, Lys68, Thr69, Thr70, 131–133, Arg174, Tyr184, and Arg221; that span reads EDY. Position 69 (Thr69) interacts with Mg(2+). The segment at 185 to 255 is small ATPAse domain (RuvB-S); the sequence is QVADLQHIVG…VAAQALNMLD (71 aa). Residues 258–334 are head domain (RuvB-H); the sequence is AAGFDYMDRK…YQHFGIDRAE (77 aa). DNA contacts are provided by Arg294, Arg313, and Arg318.

The protein belongs to the RuvB family. Homohexamer. Forms an RuvA(8)-RuvB(12)-Holliday junction (HJ) complex. HJ DNA is sandwiched between 2 RuvA tetramers; dsDNA enters through RuvA and exits via RuvB. An RuvB hexamer assembles on each DNA strand where it exits the tetramer. Each RuvB hexamer is contacted by two RuvA subunits (via domain III) on 2 adjacent RuvB subunits; this complex drives branch migration. In the full resolvosome a probable DNA-RuvA(4)-RuvB(12)-RuvC(2) complex forms which resolves the HJ.

The protein localises to the cytoplasm. It carries out the reaction ATP + H2O = ADP + phosphate + H(+). In terms of biological role, the RuvA-RuvB-RuvC complex processes Holliday junction (HJ) DNA during genetic recombination and DNA repair, while the RuvA-RuvB complex plays an important role in the rescue of blocked DNA replication forks via replication fork reversal (RFR). RuvA specifically binds to HJ cruciform DNA, conferring on it an open structure. The RuvB hexamer acts as an ATP-dependent pump, pulling dsDNA into and through the RuvAB complex. RuvB forms 2 homohexamers on either side of HJ DNA bound by 1 or 2 RuvA tetramers; 4 subunits per hexamer contact DNA at a time. Coordinated motions by a converter formed by DNA-disengaged RuvB subunits stimulates ATP hydrolysis and nucleotide exchange. Immobilization of the converter enables RuvB to convert the ATP-contained energy into a lever motion, pulling 2 nucleotides of DNA out of the RuvA tetramer per ATP hydrolyzed, thus driving DNA branch migration. The RuvB motors rotate together with the DNA substrate, which together with the progressing nucleotide cycle form the mechanistic basis for DNA recombination by continuous HJ branch migration. Branch migration allows RuvC to scan DNA until it finds its consensus sequence, where it cleaves and resolves cruciform DNA. This chain is Holliday junction branch migration complex subunit RuvB, found in Edwardsiella ictaluri (strain 93-146).